Here is a 69-residue protein sequence, read N- to C-terminus: Light-harvesting protein B-1015 beta chain (69 aa).

The Cytoplasmic portion of the chain corresponds to 2–21 (ADLKPSLTGLTEEEAKEFHG). Residues His-20 and His-38 each contribute to the a bacteriochlorophyll site. The helical transmembrane segment at 22 to 44 (IFVTSTVLYLATAVIVHYLVWTA) threads the bilayer. The Periplasmic portion of the chain corresponds to 45–56 (RPWIAPIPKGWV). The propeptide occupies 57–69 (NLEGVQSALSYLV).

Belongs to the antenna complex beta subunit family. The core complex is formed by different alpha and beta chains, binding bacteriochlorophyll molecules, and arranged most probably in tetrameric structures disposed around the reaction center. The non-pigmented gamma chains may constitute additional components.

The protein resides in the cell inner membrane. Antenna complexes are light-harvesting systems, which transfer the excitation energy to the reaction centers. The protein is Light-harvesting protein B-1015 beta chain (pufB) of Blastochloris viridis (Rhodopseudomonas viridis).